Consider the following 110-residue polypeptide: Small EDRK-rich factor 1 (110 aa).

Residues 1 to 30 (MARGNQRELARQKNMKKTQEISKGKRKEDS) are compositionally biased toward basic and acidic residues. The segment at 1–61 (MARGNQRELA…GPHLPLKAPR (61 aa)) is disordered. Residues 11-17 (RQKNMKK) form a required for SNCA binding region. Residues 34–50 (SQRKQSSGGQKSESKMS) are compositionally biased toward low complexity.

It belongs to the SERF family. Interacts with SNCA; this interaction promotes the aggregation of SNCA. As to expression, isoform Long is predominantly expressed in heart, brain and skeletal muscle. Isoform Short and Isoform Long are expressed throughout the central nervous system, including spinal cord.

The protein localises to the cytoplasm. It localises to the cytosol. The protein resides in the nucleus. Its function is as follows. Positive regulator of amyloid protein aggregation and proteotoxicity. Induces conformational changes in amyloid proteins, such as APP, HTT, and SNCA, driving them into compact formations preceding the formation of aggregates. The polypeptide is Small EDRK-rich factor 1 (SERF1A) (Homo sapiens (Human)).